A 729-amino-acid polypeptide reads, in one-letter code: Denticleless protein homolog (729 aa).

Position 1 is an N-acetylmethionine (Met1). WD repeat units lie at residues 47 to 89 (GVPV…SKKT), 96 to 135 (AHWNAVFDLAWVPGELKLVTAAGDQTAKFWDVRAGELMGT), and 138 to 178 (GHQC…KDGF). The DDB1-binding motif motif lies at 168-171 (WDTR). Residues 189–198 (HNTADKQTPS) show a composition bias toward polar residues. Residues 189–212 (HNTADKQTPSKPKKKQNSKGLAPA) are disordered. Residue Thr196 is modified to Phosphothreonine. Residues 197-203 (PSKPKKK) carry the Nuclear localization signal motif. WD repeat units follow at residues 214–253 (DSQQSVTVVLFQDENTLVSAGAVDGIIKVWDLRKNYTAYR), 269–308 (TRKLGYSSLVLDSTGSTLFANCTDDNIYMFNMTGLKTSPV), 313–354 (GHQN…HPPT), and 358–398 (GHSQ…EEKP). The short motif at 243 to 246 (WDLR) is the DDB1-binding motif element. 2 positions are modified to phosphoserine: Ser409 and Ser425. Disordered regions lie at residues 416 to 445 (KACPVTVPSSQSTPAKAPRAKSSPSISSPS) and 460 to 491 (PSSTPTFSVKTTPATTRSSVSRRGSISSVSPK). Residues 427 to 445 (STPAKAPRAKSSPSISSPS) show a composition bias toward low complexity. The span at 460-475 (PSSTPTFSVKTTPATT) shows a compositional bias: polar residues. Residue Thr463 is modified to Phosphothreonine; by CDK1 and CDK2. The span at 476 to 491 (RSSVSRRGSISSVSPK) shows a compositional bias: low complexity. Ser484, Ser489, Ser494, and Ser511 each carry phosphoserine. The segment at 504-546 (VTRTPSSSPPVTPPASETKISSPRKALIPVSQKSSQADACSES) is disordered. Thr515 is modified (phosphothreonine). Position 556 is a phosphoserine (Ser556). Over residues 596–607 (VLSQDSEGPTKS) the composition is skewed to polar residues. The interval 596–705 (VLSQDSEGPT…GPVTITPSSM (110 aa)) is disordered. Low complexity-rich tracts occupy residues 630–645 (EGCGPLPLPLRPCGEG) and 674–688 (SSPRSPSSQTPSSRR). A phosphoserine mark is found at Ser675 and Ser678. Residues Thr683 and Thr701 each carry the phosphothreonine modification.

The protein belongs to the WD repeat cdt2 family. As to quaternary structure, component of the DCX(DTL) E3 ubiquitin ligase complex (also called CRL4(CDT2)), at least composed of CUL4 (CUL4A or CUL4B), DDB1, DTL/CDT2 and RBX1. Interacts with CDKN1A and DDB1. Interacts with FBXO11; SCF(FBXWO11) controls DTL stability but DCX(DTL) does not control FBXO11 stability. Interacts with CRY1. In terms of processing, ubiquitinated by the anaphase promoting complex/cyclosome (APC/C). Autoubiquitinated through 'Lys-48'-polyubiquitin chains in a PCNA-independent reaction, allowing proteasomal turnover. Polyubiquitinated by SCF(FBXO11) when not phosphorylated, leading to its degradation. A tight regulation of the polyubiquitination by SCF(FBXO11) is involved in the control of different processes such as TGF-beta signaling, cell cycle progression and exit. Phosphorylated at Thr-463 by CDK1/Cyclin B and CDK2/Cycnlin A but not by CDK2/Cyclin E, MAPK1 or PLK1. Phosphorylation at Thr-463 inhibits the interaction with FBXO11 and decreases upon cell cycle exit induced by TGF-beta or serum starvation.

The protein localises to the nucleus. Its subcellular location is the nucleus membrane. The protein resides in the cytoplasm. It is found in the cytoskeleton. It localises to the microtubule organizing center. The protein localises to the centrosome. Its subcellular location is the chromosome. The protein operates within protein modification; protein ubiquitination. Functionally, substrate-specific adapter of a DCX (DDB1-CUL4-X-box) E3 ubiquitin-protein ligase complex required for cell cycle control, DNA damage response and translesion DNA synthesis. The DCX(DTL) complex, also named CRL4(CDT2) complex, mediates the polyubiquitination and subsequent degradation of CDT1, CDKN1A/p21(CIP1), FBH1, KMT5A and SDE2. CDT1 degradation in response to DNA damage is necessary to ensure proper cell cycle regulation of DNA replication. CDKN1A/p21(CIP1) degradation during S phase or following UV irradiation is essential to control replication licensing. KMT5A degradation is also important for a proper regulation of mechanisms such as TGF-beta signaling, cell cycle progression, DNA repair and cell migration. Most substrates require their interaction with PCNA for their polyubiquitination: substrates interact with PCNA via their PIP-box, and those containing the 'K+4' motif in the PIP box, recruit the DCX(DTL) complex, leading to their degradation. In undamaged proliferating cells, the DCX(DTL) complex also promotes the 'Lys-164' monoubiquitination of PCNA, thereby being involved in PCNA-dependent translesion DNA synthesis. The DDB1-CUL4A-DTL E3 ligase complex regulates the circadian clock function by mediating the ubiquitination and degradation of CRY1. In Mus musculus (Mouse), this protein is Denticleless protein homolog (Dtl).